Reading from the N-terminus, the 242-residue chain is Spiralin (242 aa).

Positions 1 to 23 (MKKLLSILAVFGVSAVGTTSVVA) are cleaved as a signal peptide. Cysteine 24 carries the N-palmitoyl cysteine lipid modification. Cysteine 24 carries the S-diacylglycerol cysteine lipid modification.

This sequence belongs to the spiralin family. As to quaternary structure, seems to occur as dimer, tetramers, and large oligomers of identical chains. Palmitate and stearate are the major lipid components.

The protein localises to the cell membrane. Its function is as follows. Major membrane protein of spiroplasma. This Spiroplasma melliferum protein is Spiralin (spi).